Reading from the N-terminus, the 281-residue chain is Nicotinamide/nicotinic acid mononucleotide adenylyltransferase 1 (281 aa).

Beta-nicotinamide D-ribonucleotide is bound by residues Gly15 and Ser16. The NAD(+) site is built by Gly15, Ser16, Phe17, and Met23. 15-17 provides a ligand contact to ATP; sequence GSF. His24 is an ATP binding site. Positions 55 and 57 each coordinate beta-nicotinamide D-ribonucleotide. NAD(+) is bound at residue Lys57. Lys58 lines the ATP pocket. Beta-nicotinamide D-ribonucleotide is bound by residues Trp92 and Thr95. Trp92 and Thr95 together coordinate NAD(+). The disordered stretch occupies residues 113–143; it reads PQQNSPVLEKPGRKRKWAEQKQDISEKKSLE. Ser117 carries the phosphoserine modification. Positions 123–129 match the Nuclear localization signal motif; that stretch reads PGRKRKW. Basic and acidic residues predominate over residues 129-143; that stretch reads WAEQKQDISEKKSLE. NAD(+)-binding residues include Gly158, Asp160, Leu170, Trp171, Glu217, and Asn221. Position 158 to 160 (158 to 160) interacts with ATP; the sequence is GAD. Beta-nicotinamide D-ribonucleotide is bound by residues Leu170 and Trp171. 226 to 229 serves as a coordination point for ATP; sequence TKIR.

This sequence belongs to the eukaryotic NMN adenylyltransferase family. As to quaternary structure, homohexamer. Interacts with ADPRT/PARP1. Zn(2+) serves as cofactor. The cofactor is Mg(2+).

The protein resides in the nucleus. The enzyme catalyses beta-nicotinamide D-ribonucleotide + ATP + H(+) = diphosphate + NAD(+). It catalyses the reaction nicotinate beta-D-ribonucleotide + ATP + H(+) = deamido-NAD(+) + diphosphate. It participates in cofactor biosynthesis; NAD(+) biosynthesis; NAD(+) from nicotinamide D-ribonucleotide: step 1/1. The protein operates within cofactor biosynthesis; NAD(+) biosynthesis; deamido-NAD(+) from nicotinate D-ribonucleotide: step 1/1. Activity is strongly inhibited by galotannin. Inhibited by P1-(adenosine-5')-P4-(nicotinic-acid-riboside-5')-tetraphosphate (Nap4AD). Its function is as follows. Catalyzes the formation of NAD(+) from nicotinamide mononucleotide (NMN) and ATP. Can also use the deamidated form; nicotinic acid mononucleotide (NaMN) as substrate with the same efficiency. Can use triazofurin monophosphate (TrMP) as substrate. Also catalyzes the reverse reaction, i.e. the pyrophosphorolytic cleavage of NAD(+). For the pyrophosphorolytic activity, prefers NAD(+) and NaAD as substrates and degrades NADH, nicotinic acid adenine dinucleotide phosphate (NHD) and nicotinamide guanine dinucleotide (NGD) less effectively. Involved in the synthesis of ATP in the nucleus, together with PARP1, PARG and NUDT5. Nuclear ATP generation is required for extensive chromatin remodeling events that are energy-consuming. Fails to cleave phosphorylated dinucleotides NADP(+), NADPH and NaADP(+). Also acts as a cofactor for glutamate and aspartate ADP-ribosylation by directing PARP1 catalytic activity to glutamate and aspartate residues on histones. Protects against axonal degeneration following mechanical or toxic insults. Delays axonal degeneration after axotomy. Results in a &gt;10-fold increase in intact neurites 72 hours after injury. Neural protection does not correlate with cellular NAD(+) levels but may still require enzyme activity. This is Nicotinamide/nicotinic acid mononucleotide adenylyltransferase 1 (NMNAT1) from Bos taurus (Bovine).